A 186-amino-acid polypeptide reads, in one-letter code: Ribosome-recycling factor (186 aa).

It belongs to the RRF family.

The protein localises to the cytoplasm. Responsible for the release of ribosomes from messenger RNA at the termination of protein biosynthesis. May increase the efficiency of translation by recycling ribosomes from one round of translation to another. The sequence is that of Ribosome-recycling factor from Rickettsia conorii (strain ATCC VR-613 / Malish 7).